Here is a 352-residue protein sequence, read N- to C-terminus: tRNA N6-adenosine threonylcarbamoyltransferase (352 aa).

H111 and H115 together coordinate Fe cation. Residues 133-137 (LASGG), D166, G179, and N275 each bind substrate. Residue D300 coordinates Fe cation.

The protein belongs to the KAE1 / TsaD family. Fe(2+) serves as cofactor.

Its subcellular location is the cytoplasm. The catalysed reaction is L-threonylcarbamoyladenylate + adenosine(37) in tRNA = N(6)-L-threonylcarbamoyladenosine(37) in tRNA + AMP + H(+). Functionally, required for the formation of a threonylcarbamoyl group on adenosine at position 37 (t(6)A37) in tRNAs that read codons beginning with adenine. Is involved in the transfer of the threonylcarbamoyl moiety of threonylcarbamoyl-AMP (TC-AMP) to the N6 group of A37, together with TsaE and TsaB. TsaD likely plays a direct catalytic role in this reaction. The polypeptide is tRNA N6-adenosine threonylcarbamoyltransferase (Treponema pallidum (strain Nichols)).